The sequence spans 292 residues: Elongation factor Ts (292 aa).

Positions Thr79–Val82 are involved in Mg(2+) ion dislocation from EF-Tu.

It belongs to the EF-Ts family.

The protein resides in the cytoplasm. Its function is as follows. Associates with the EF-Tu.GDP complex and induces the exchange of GDP to GTP. It remains bound to the aminoacyl-tRNA.EF-Tu.GTP complex up to the GTP hydrolysis stage on the ribosome. The polypeptide is Elongation factor Ts (Xanthomonas campestris pv. campestris (strain ATCC 33913 / DSM 3586 / NCPPB 528 / LMG 568 / P 25)).